A 243-amino-acid chain; its full sequence is Vesicle-associated membrane protein-associated protein B (243 aa).

Alanine 2 bears the N-acetylalanine mark. The Cytoplasmic segment spans residues 2–218 (AKVEQVLSLE…AALAASGKEE (217 aa)). Residues 7 to 124 (VLSLEPQHEL…MDSKLRCVFE (118 aa)) enclose the MSP domain. Serine 146 is subject to Phosphoserine. Lysine 147 participates in a covalent cross-link: Glycyl lysine isopeptide (Lys-Gly) (interchain with G-Cter in SUMO1). A Phosphoserine modification is found at serine 159. Residues 161–196 (LDDAEVKKVMEECRRLQGEVQRLREESRQLKEEDGL) adopt a coiled-coil conformation. Serine 206 bears the Phosphoserine mark. The helical; Anchor for type IV membrane protein transmembrane segment at 219–239 (GLSARLLALVVLFFIVGVIIG) threads the bilayer.

The protein belongs to the VAMP-associated protein (VAP) (TC 9.B.17) family. Homodimer, and heterodimer with VAPA. Interacts with VAMP1 and VAMP2. Interacts (via MSP domain) with ZFYVE27. Interacts with RMDN3. Interacts with KIF5A in a ZFYVE27-dependent manner. Interacts (via MSP domain) with STARD3 (via phospho-FFAT motif). Interacts with STARD3NL (via FFAT motif). Interacts with CERT1. Interacts with PLEKHA3 and SACM1L to form a ternary complex. Interacts with VPS13A (via FFAT motif). Interacts with RB1CC1 (via phosphorylated FFAT motif), MIGA2 (via phosphorylated FFAT motif), RMDN3 (via phosphorylated FFAT motif), OSBPL1A (via FFAT motif), KCNB1 (via phosphorylated FFAT motif) and KCNB2 (via phosphorylated FFAT motif). Interacts (via MSP domain) with WDR44; the interactions connect the endoplasmic reticulum (ER) with the endosomal tubule. As to expression, ubiquitous.

Its subcellular location is the endoplasmic reticulum membrane. In terms of biological role, endoplasmic reticulum (ER)-anchored protein that mediates the formation of contact sites between the ER and endosomes via interaction with FFAT motif-containing proteins such as STARD3 or WDR44. Interacts with STARD3 in a FFAT motif phosphorylation dependent manner. Via interaction with WDR44 participates in neosynthesized protein export. Participates in the endoplasmic reticulum unfolded protein response (UPR) by inducing ERN1/IRE1 activity. Involved in cellular calcium homeostasis regulation. The chain is Vesicle-associated membrane protein-associated protein B from Rattus norvegicus (Rat).